The sequence spans 542 residues: Glutamyl-tRNA reductase 2, chloroplastic (542 aa).

Residues 142-145 (TCNR), S202, 207-209 (EGQ), and Q213 contribute to the substrate site. The active-site Nucleophile is the C143. NADP(+) is bound at residue 284–289 (GAGKMG).

It belongs to the glutamyl-tRNA reductase family. Found in all tissues examined.

Its subcellular location is the plastid. It is found in the chloroplast. The catalysed reaction is (S)-4-amino-5-oxopentanoate + tRNA(Glu) + NADP(+) = L-glutamyl-tRNA(Glu) + NADPH + H(+). Its pathway is porphyrin-containing compound metabolism; protoporphyrin-IX biosynthesis; 5-aminolevulinate from L-glutamyl-tRNA(Glu): step 1/2. In terms of biological role, catalyzes the NADPH-dependent reduction of glutamyl-tRNA(Glu) to glutamate 1-semialdehyde (GSA). This is Glutamyl-tRNA reductase 2, chloroplastic (HEMA2) from Cucumis sativus (Cucumber).